The primary structure comprises 225 residues: Proteasome activator 28 (225 aa).

It belongs to the PA28 family. In terms of assembly, homoheptamer. The homoheptamer associates with the 20S proteasome.

The protein localises to the nucleus. Its function is as follows. Subunit of the 11S REG (also called PA28) proteasome regulator, a doughnut-shaped homoheptamer which associates with the proteasome. 11S REG-gamma activates preferentially the trypsin-like catalytic subunit of the proteasome. May also be involved in cell cycle regulation. This is Proteasome activator 28 (psmE3) from Dictyostelium discoideum (Social amoeba).